A 154-amino-acid polypeptide reads, in one-letter code: Prefoldin subunit 2 (154 aa).

Disordered stretches follow at residues 1-20 (MADSSGRVGKSGGSGAGKGA) and 126-154 (LMGEDEKPAAKENSEGAGAKASSAGVLVS). Over residues 9–18 (GKSGGSGAGK) the composition is skewed to gly residues. Basic and acidic residues predominate over residues 126–139 (LMGEDEKPAAKENS). Low complexity predominate over residues 140 to 154 (EGAGAKASSAGVLVS).

The protein belongs to the prefoldin subunit beta family. In terms of assembly, heterohexamer of two PFD-alpha type and four PFD-beta type subunits. Component of the PAQosome complex which is responsible for the biogenesis of several protein complexes and which consists of R2TP complex members RUVBL1, RUVBL2, RPAP3 and PIH1D1, URI complex members PFDN2, PFDN6, PDRG1, UXT and URI1 as well as ASDURF, POLR2E and DNAAF10/WDR92. Interacts with URI1; the interaction is phosphorylation-dependent and occurs in a growth-dependent manner.

The protein localises to the nucleus. Its subcellular location is the cytoplasm. It localises to the mitochondrion. Functionally, binds specifically to cytosolic chaperonin (c-CPN) and transfers target proteins to it. Binds to nascent polypeptide chain and promotes folding in an environment in which there are many competing pathways for nonnative proteins. This Mus musculus (Mouse) protein is Prefoldin subunit 2 (Pfdn2).